We begin with the raw amino-acid sequence, 177 residues long: Dihydrofolate reductase type 9 (177 aa).

The region spanning 3–167 is the DHFR domain; sequence SLNMIVAVNK…TKLIFQIWIN (165 aa).

Belongs to the dihydrofolate reductase family. In terms of assembly, homodimer.

It carries out the reaction (6S)-5,6,7,8-tetrahydrofolate + NADP(+) = 7,8-dihydrofolate + NADPH + H(+). It participates in cofactor biosynthesis; tetrahydrofolate biosynthesis; 5,6,7,8-tetrahydrofolate from 7,8-dihydrofolate: step 1/1. Functionally, key enzyme in folate metabolism. Catalyzes an essential reaction for de novo glycine and purine synthesis, and for DNA precursor synthesis. This Escherichia coli protein is Dihydrofolate reductase type 9 (dhfrIX).